The primary structure comprises 120 residues: NAD(P)H-quinone oxidoreductase subunit 3, chloroplastic (120 aa).

3 helical membrane-spanning segments follow: residues 10–30, 64–84, and 89–109; these read FLVF…ASKL, MFAL…PWAV, and MGFI…VGLV.

It belongs to the complex I subunit 3 family. As to quaternary structure, NDH is composed of at least 16 different subunits, 5 of which are encoded in the nucleus.

It localises to the plastid. It is found in the chloroplast thylakoid membrane. It catalyses the reaction a plastoquinone + NADH + (n+1) H(+)(in) = a plastoquinol + NAD(+) + n H(+)(out). The catalysed reaction is a plastoquinone + NADPH + (n+1) H(+)(in) = a plastoquinol + NADP(+) + n H(+)(out). Its function is as follows. NDH shuttles electrons from NAD(P)H:plastoquinone, via FMN and iron-sulfur (Fe-S) centers, to quinones in the photosynthetic chain and possibly in a chloroplast respiratory chain. The immediate electron acceptor for the enzyme in this species is believed to be plastoquinone. Couples the redox reaction to proton translocation, and thus conserves the redox energy in a proton gradient. The polypeptide is NAD(P)H-quinone oxidoreductase subunit 3, chloroplastic (Chlorokybus atmophyticus (Soil alga)).